Consider the following 283-residue polypeptide: tRNA pseudouridine synthase B (283 aa).

Aspartate 38 functions as the Nucleophile in the catalytic mechanism.

This sequence belongs to the pseudouridine synthase TruB family. Type 1 subfamily.

The enzyme catalyses uridine(55) in tRNA = pseudouridine(55) in tRNA. In terms of biological role, responsible for synthesis of pseudouridine from uracil-55 in the psi GC loop of transfer RNAs. The chain is tRNA pseudouridine synthase B from Onion yellows phytoplasma (strain OY-M).